Consider the following 268-residue polypeptide: MAQPLCPPLSESWMLSAAWGPTRRPPPSDKDCGRSLVSSPDSWGSTPADSPVASPARPGTLRDPRAPSVGRRGARSSRLGSGQRQSASEREKLRMRTLARALHELRRFLPPSVAPAGQSLTKIETLRLAIRYIGHLSAVLGLSEESLQRRCRQRGDAGSPRGCPLCPDDCPAQMQTRTQAEGQGQGRGLGLVSAVRAGASWGSPPACPGARAAPEPRDPPALFAEAACPEGQAMEPSPPSPLLPGDVLALLETWMPLSPLEWLPEEPK.

Residues 17 to 93 (AAWGPTRRPP…RQSASEREKL (77 aa)) form a disordered region. Polar residues predominate over residues 36-48 (LVSSPDSWGSTPA). Residues 66 to 86 (APSVGRRGARSSRLGSGQRQS) show a composition bias toward low complexity. Residues 82-136 (GQRQSASEREKLRMRTLARALHELRRFLPPSVAPAGQSLTKIETLRLAIRYIGHL) form the bHLH domain. Residues 163–167 (CPLCP) carry the CPLCP motif. 2 consecutive repeat copies span residues 182–183 (GQ) and 184–185 (GQ). A 2 X 2 AA tandem repeats of G-Q region spans residues 182–185 (GQGQ).

Its subcellular location is the nucleus. Its function is as follows. Transcription factor. Plays a role in the epithelialization of somitic mesoderm and in the development of cardiac mesoderm. Defines the rostrocaudal patterning of the somites by participating in distinct Notch pathways. The chain is Mesoderm posterior protein 1 (MESP1) from Homo sapiens (Human).